Reading from the N-terminus, the 316-residue chain is 4-diphosphocytidyl-2-C-methyl-D-erythritol kinase (316 aa).

The active site involves K32. An ATP-binding site is contributed by 126 to 136 (PVGAGLGGGSA). The active site involves D168.

It belongs to the GHMP kinase family. IspE subfamily.

The enzyme catalyses 4-CDP-2-C-methyl-D-erythritol + ATP = 4-CDP-2-C-methyl-D-erythritol 2-phosphate + ADP + H(+). It participates in isoprenoid biosynthesis; isopentenyl diphosphate biosynthesis via DXP pathway; isopentenyl diphosphate from 1-deoxy-D-xylulose 5-phosphate: step 3/6. Functionally, catalyzes the phosphorylation of the position 2 hydroxy group of 4-diphosphocytidyl-2C-methyl-D-erythritol. This Bifidobacterium longum (strain DJO10A) protein is 4-diphosphocytidyl-2-C-methyl-D-erythritol kinase.